The following is a 548-amino-acid chain: Organic cation transporter protein (548 aa).

The Cytoplasmic portion of the chain corresponds to methionine 1–tyrosine 22. The chain crosses the membrane as a helical span at residues leucine 23 to alanine 43. Over lysine 44 to serine 127 the chain is Extracellular. Asparagine 55, asparagine 67, asparagine 89, and asparagine 97 each carry an N-linked (GlcNAc...) asparagine glycan. Residues leucine 128–phenylalanine 148 traverse the membrane as a helical segment. Residues glycine 149–lysine 158 lie on the Cytoplasmic side of the membrane. Residues proline 159–proline 179 form a helical membrane-spanning segment. Over glutamate 180 to methionine 189 the chain is Extracellular. The helical transmembrane segment at isoleucine 190–valine 210 threads the bilayer. The Cytoplasmic segment spans residues glycine 211–glycine 219. A helical membrane pass occupies residues valine 220 to isoleucine 240. Residues histidine 241–arginine 244 lie on the Extracellular side of the membrane. Residues tryptophan 245 to proline 265 form a helical membrane-spanning segment. Over glutamate 266 to lysine 337 the chain is Cytoplasmic. Residues threonine 338–asparagine 358 traverse the membrane as a helical segment. At threonine 359 to glutamine 366 the chain is on the extracellular side. Residues leucine 367–threonine 387 form a helical membrane-spanning segment. Residues leucine 388–serine 395 lie on the Cytoplasmic side of the membrane. Residues isoleucine 396–serine 416 traverse the membrane as a helical segment. Topologically, residues aspartate 417 to asparagine 419 are extracellular. A helical membrane pass occupies residues tryptophan 420–isoleucine 440. Topologically, residues tyrosine 441 to arginine 453 are cytoplasmic. The helical transmembrane segment at asparagine 454–leucine 474 threads the bilayer. Residues lysine 475–arginine 482 are Extracellular-facing. The chain crosses the membrane as a helical span at residues proline 483–leucine 503. At proline 504 to glycine 548 the chain is on the cytoplasmic side. Residues proline 512–glycine 548 are disordered.

The protein belongs to the major facilitator (TC 2.A.1) superfamily. Organic cation transporter (TC 2.A.1.19) family. Expressed in embryos and adults at low level. Expressed at higher level in third instar larvae.

Its subcellular location is the membrane. Its function is as follows. Probably transports organic cations. In Drosophila melanogaster (Fruit fly), this protein is Organic cation transporter protein (Orct).